The sequence spans 425 residues: Inhibin beta A chain (425 aa).

Residues 1-20 (MPLLWLRGFLLASCWIIVRS) form the signal peptide. Residues 21–309 (SPTPGSEGHS…EDHPHRRRRR (289 aa)) constitute a propeptide that is removed on maturation. Asn165 carries N-linked (GlcNAc...) asparagine glycosylation. The tract at residues 260 to 289 (KKRKEEEGEGKKRDGEGGAGGDEEKEQSHR) is disordered. Positions 263–275 (KEEEGEGKKRDGE) are enriched in basic and acidic residues. 4 disulfides stabilise this stretch: Cys313-Cys321, Cys320-Cys390, Cys349-Cys422, and Cys353-Cys424.

It belongs to the TGF-beta family. As to quaternary structure, dimeric, linked by one or more disulfide bonds. Inhibin A is a dimer of alpha/INHA and beta-A/INHBA. Activin A is a homodimer of beta-A/INHBA. Activin AB is a dimer of beta-A/INHBA and beta-B/INHBB. Interacts with FST and FSTL3; these interactions prevent activin A interaction to its type II receptor. Activin A interacts with ACVR2A. Activin A interacts with BMPR2. Inhibin A interacts with ACVR1; this interaction creates a non-signaling complex (NSC) that inhibits ACVR1-mediated BMP signaling. Inhibin A interacts with ACVR2A.

The protein resides in the secreted. Its function is as follows. Inhibins/activins are involved in regulating a number of diverse functions such as hypothalamic and pituitary hormone secretion, gonadal hormone secretion, germ cell development and maturation, erythroid differentiation, insulin secretion, nerve cell survival, embryonic axial development or bone growth, depending on their subunit composition. Functionally, activin A is a homodimer of INHBA that plays a role in several essential biological processes including embryonic development, stem cell maintenance and differentiation, haematopoiesis, cell proliferation and tissue fibrosis. Signals through type I (such as ACVR1B or ACVR1C) and type II receptors (such as ACVR2A, ACVR2B or BMPR2) which, upon ligand binding, phosphorylate SMAD2 and SMAD3 intracellular signaling mediators that form a complex with SMAD4, translocate to the nucleus and modulate gene expression. Can also activate alternative non-canonical intracellular signaling pathways including the p38 MAPK, extracellular signal-regulated kinases 1/2 (ERK1/2) and c-Jun N-terminal kinases (JNKs) to modulate cell migration and differentiation. Alternatively, promotes osteoblastic differentiation via ACVRL1-SMAD1/5/9 pathway. In addition, can engage the type I receptor ACVR1 to form an ACVR1-activin A-type II receptor non-signaling complex (NSC) that renders receptors unavailable for engagement with BMPs, hence resulting in an apparent inhibition of ACVR1-mediated BMP signaling. Inhibin A is a dimer of alpha/INHA and beta-A/INHBA that functions as a feedback regulator in the hypothalamic-pituitary-gonadal (HPG) axis. Inhibits the secretion of FSH from the anterior pituitary gland by acting on pituitary gonadotrope cells. Antagonizes activin A by binding to the proteoglycan, betaglycan, and forming a stable complex with and, thereby, sequestering type II activin receptors while excluding type I receptor. The sequence is that of Inhibin beta A chain (INHBA) from Ovis aries (Sheep).